We begin with the raw amino-acid sequence, 248 residues long: Probable transcriptional regulatory protein Syncc9902_0542 (248 aa).

This sequence belongs to the TACO1 family.

The protein localises to the cytoplasm. This is Probable transcriptional regulatory protein Syncc9902_0542 from Synechococcus sp. (strain CC9902).